Consider the following 524-residue polypeptide: GMP synthase [glutamine-hydrolyzing] (524 aa).

Residues 5–195 (KVIVIDFGGQ…VRGVCGCAGT (191 aa)) form the Glutamine amidotransferase type-1 domain. Cys82 acts as the Nucleophile in catalysis. Active-site residues include His169 and Glu171. One can recognise a GMPS ATP-PPase domain in the interval 196-389 (WKMDSFVKNT…LGLPDYLVFR (194 aa)). 223 to 229 (SGGVDSS) provides a ligand contact to ATP.

As to quaternary structure, homodimer.

It carries out the reaction XMP + L-glutamine + ATP + H2O = GMP + L-glutamate + AMP + diphosphate + 2 H(+). It participates in purine metabolism; GMP biosynthesis; GMP from XMP (L-Gln route): step 1/1. Functionally, catalyzes the synthesis of GMP from XMP. The sequence is that of GMP synthase [glutamine-hydrolyzing] from Agathobacter rectalis (strain ATCC 33656 / DSM 3377 / JCM 17463 / KCTC 5835 / VPI 0990) (Eubacterium rectale).